Consider the following 176-residue polypeptide: NAD(P)H-quinone oxidoreductase subunit 6, chloroplastic (176 aa).

Transmembrane regions (helical) follow at residues 10–30 (ILVL…VLLT), 33–53 (TFSA…YILL), 60–80 (VAQL…AVMF), 92–112 (FWTI…FSLM), and 152–172 (FYLP…GAIT).

Belongs to the complex I subunit 6 family. NDH is composed of at least 16 different subunits, 5 of which are encoded in the nucleus.

It localises to the plastid. The protein localises to the chloroplast thylakoid membrane. It carries out the reaction a plastoquinone + NADH + (n+1) H(+)(in) = a plastoquinol + NAD(+) + n H(+)(out). The catalysed reaction is a plastoquinone + NADPH + (n+1) H(+)(in) = a plastoquinol + NADP(+) + n H(+)(out). In terms of biological role, NDH shuttles electrons from NAD(P)H:plastoquinone, via FMN and iron-sulfur (Fe-S) centers, to quinones in the photosynthetic chain and possibly in a chloroplast respiratory chain. The immediate electron acceptor for the enzyme in this species is believed to be plastoquinone. Couples the redox reaction to proton translocation, and thus conserves the redox energy in a proton gradient. This chain is NAD(P)H-quinone oxidoreductase subunit 6, chloroplastic (ndhG), found in Oryza nivara (Indian wild rice).